Here is a 352-residue protein sequence, read N- to C-terminus: MINQRFSILVLLLILLTFSLGFLKEEAKGMEIPSLKEVYKDYFTIGAAVSHLNIYHYENLLKKHFNSLTPENQMKWEVIHPKPYVYDFGPADEIVDFAMKNGMKVRGHTLVWHNQTPGWVYAGTKDEILARLKEHIKEVVGHYKGKVYAWDVVNEALSDNPNEFLRRAPWYDICGEEVIEKAFIWAHEVDPDAKLFYNDYNLEDPIKREKAYKLVKKLKDKGVPIHGIGIQGHWTLAWPTPKMLEDSIKRFAELGVEVQVTEFDISIYYDRNENNNFKVPPEDRLERQAQLYKEAFEILRKYKGIVTGVTFWGVADDYTWLYFWPVRGREDYPLLFDKNHNPKKAFWEIVKF.

The N-terminal stretch at 1-23 is a signal peptide; that stretch reads MINQRFSILVLLLILLTFSLGFL. In terms of domain architecture, GH10 spans 29-352; it reads GMEIPSLKEV…KKAFWEIVKF (324 aa). Catalysis depends on Glu155, which acts as the Proton donor. Glu262 functions as the Nucleophile in the catalytic mechanism.

It belongs to the glycosyl hydrolase 10 (cellulase F) family.

The protein resides in the secreted. It carries out the reaction Endohydrolysis of (1-&gt;4)-beta-D-xylosidic linkages in xylans.. It functions in the pathway glycan degradation; xylan degradation. The chain is Beta-1,4-xylanase (xynA) from Dictyoglomus thermophilum.